Consider the following 382-residue polypeptide: Prophage ps2 probable integrase (382 aa).

The 80-residue stretch at 63–142 folds into the Core-binding (CB) domain; the sequence is AKFTDIAEEW…TLNLIFDYAV (80 aa). A Tyr recombinase domain is found at 170 to 376; it reads IQNKYLEQNE…TENMKSSIID (207 aa). Active-site residues include Arg-209, Lys-242, His-326, Arg-329, and His-352. Tyr-363 acts as the O-(3'-phospho-DNA)-tyrosine intermediate in catalysis.

This sequence belongs to the 'phage' integrase family.

The polypeptide is Prophage ps2 probable integrase (ps201) (Lactococcus lactis subsp. lactis (strain IL1403) (Streptococcus lactis)).